A 7031-amino-acid chain; its full sequence is Extracellular matrix-binding protein EbhB (7031 aa).

Residues 1-39 (MNYRDKIQKFSIRKYTVGTFSTVIATLVFLGFNTSQAHA) form the signal peptide. The span at 41 to 59 (ETNQPASVVKQKQQSNNEQ) shows a compositional bias: polar residues. Disordered regions lie at residues 41–86 (ETNQ…HENE), 99–152 (KVAQ…GNDN), 250–277 (PQRQQTSRRSNRIQTRSVESRAAEPRSV), 1342–1373 (NNITGNEKSQAEAGGRPNFRTTGYSQSNATTD), and 2418–2438 (TITPKAGTGHSVSSNPSTLTA). Over residues 65–80 (SQVQNSQNSQNGQSLS) the composition is skewed to low complexity. Residues 99–117 (KVAQSSTTNDEQPASQNVN) show a composition bias toward polar residues. Residues 130–140 (PDKEQSKHKQN) show a composition bias toward basic and acidic residues. Composition is skewed to polar residues over residues 141–151 (ESQSANKNGND), 250–266 (PQRQQTSRRSNRIQTRS), 1360–1373 (FRTTGYSQSNATTD), and 2427–2438 (HSVSSNPSTLTA). 38 FIVAR domains span residues 2524 to 2580 (AKNH…VSDA), 2610 to 2666 (SKNN…ISDE), 2687 to 2750 (DTHA…VQSA), 2780 to 2836 (AKTK…IAAE), 2864 to 2919 (AKTQ…IRQN), 2947 to 3002 (AKNQ…INTN), 3030 to 3085 (AKTQ…INDK), 3154 to 3212 (AMTK…VNQK), 3280 to 3339 (AMTG…VNNA), 3407 to 3465 (AMGN…VNRA), 3533 to 3591 (AMGN…VTEA), 3659 to 3717 (AMNT…ITQK), 3785 to 3843 (AMAS…VEAA), 3911 to 3969 (AMGN…VEQA), 4037 to 4095 (AMGT…VTAA), 4163 to 4221 (AMKG…ITQA), 4289 to 4347 (QMGN…VEAA), 4415 to 4473 (AMAN…VENA), 4541 to 4599 (AMGT…INQI), 4667 to 4725 (AMGQ…VDRA), 4793 to 4851 (AMNS…VDNA), 4919 to 4977 (AMGA…INGM), 5045 to 5103 (AMTA…VNSA), 5171 to 5229 (AMKG…ITQV), 5297 to 5355 (AMHS…VEQA), 5423 to 5481 (AMGQ…VERA), 5549 to 5607 (AMTA…VTNA), 5675 to 5733 (AMKG…INQA), 5801 to 5859 (AMTN…VETA), 5927 to 5985 (AMSN…VEQA), 6053 to 6111 (AMNQ…INQK), 6179 to 6236 (AMGN…VQAA), 6304 to 6362 (AMGQ…VEAA), 6430 to 6488 (AMQR…VEQA), 6556 to 6614 (AMDQ…VTAA), 6682 to 6740 (AMNQ…VTQA), 6818 to 6866 (DKDQ…VEAA), and 6934 to 6992 (AMGN…VEAA).

The polypeptide is Extracellular matrix-binding protein EbhB (ebhB) (Staphylococcus aureus (strain Newman)).